The primary structure comprises 258 residues: Proliferating cell nuclear antigen (258 aa).

The DNA-binding element occupies 61-80 (RCDHPVTLGMDLTSLSKILR). Lys127 participates in a covalent cross-link: Glycyl lysine isopeptide (Lys-Gly) (interchain with G-Cter in SUMO). Residue Lys164 forms a Glycyl lysine isopeptide (Lys-Gly) (interchain with G-Cter in SUMO); alternate linkage. A Glycyl lysine isopeptide (Lys-Gly) (interchain with G-Cter in ubiquitin); alternate cross-link involves residue Lys164.

This sequence belongs to the PCNA family. In terms of assembly, homotrimer. Interacts with RAD30. Interacts with MCM10. Interacts with UBP10. In terms of processing, sumoylated on Lys-164, and to a lesser extent on Lys-127 by the UBC9/SIZ1 complex during S-phase; which impairs ubiquitination and function in DNA repair. Monoubiquitinated on Lys-164 by the UBC2/RAD18 complex upon DNA damage, and then polyubiquitinated through 'Lys-63'-linkage by UBC13/MMS2. Ubiquitination is required for UBC2-mediated DNA repair. Post-translationally, lys-164 is deubiquitinated by UBP10.

The protein resides in the nucleus. In terms of biological role, this protein is an auxiliary protein of DNA polymerase delta and is involved in the control of eukaryotic DNA replication by increasing the polymerase's processibility during elongation of the leading strand. Involved in DNA repair. The chain is Proliferating cell nuclear antigen (POL30) from Saccharomyces cerevisiae (strain ATCC 204508 / S288c) (Baker's yeast).